A 700-amino-acid polypeptide reads, in one-letter code: Elongation factor G (700 aa).

Positions 8 to 290 (ERYRNIGISA…AVIDYLPAPT (283 aa)) constitute a tr-type G domain. GTP contacts are provided by residues 17–24 (AHIDAGKT), 88–92 (DTPGH), and 142–145 (NKMD).

The protein belongs to the TRAFAC class translation factor GTPase superfamily. Classic translation factor GTPase family. EF-G/EF-2 subfamily.

The protein localises to the cytoplasm. Functionally, catalyzes the GTP-dependent ribosomal translocation step during translation elongation. During this step, the ribosome changes from the pre-translocational (PRE) to the post-translocational (POST) state as the newly formed A-site-bound peptidyl-tRNA and P-site-bound deacylated tRNA move to the P and E sites, respectively. Catalyzes the coordinated movement of the two tRNA molecules, the mRNA and conformational changes in the ribosome. This chain is Elongation factor G, found in Glaesserella parasuis serovar 5 (strain SH0165) (Haemophilus parasuis).